Here is a 710-residue protein sequence, read N- to C-terminus: MLTTLKPFGSVSVESKMNNKAGSFFWNLRQFSTLVSTSRTMRLCCLGLCKPKIVHSNWNILNNFHNRMQSTDIIRYLFQDAFIFKSDVGFQTKGISTLTALRIERLLYAKRLFFDSKQSLVPVDKSDDELKKVNLNHEVSNEDVLTKETKPNRISSRKLSEECNSLSDVLDAFSKAPTFPSSNYFTAMWTIAKRLSDDQKRFEKRLMFSHPAFNQLCEHMMREAKIMQYKYLLFSLHAIVKLGIPQNTILVQTLLRVTQERINECDEICLSVLSTVLEAMEPCKNVHVLRTGFRILVDQQVWKIEDVFTLQVVMKCIGKDAPIALKRKLEMKALRELDRFSVLNSQHMFEVLAAMNHRSLILLDECSKVVLDNIHGCPLRIMINILQSCKDLQYHNLDLFKGLADYVAATFDIWKFRKVLFILILFENLGFRPVGLMDLFMKRIVEDPESLNMKNILSILHTYSSLNHVYKCQNKEQFVEVMASALTGYLHTISSENLLDAVYSFCLMNYFPLAPFNQLLQKDIISELLTSDDMKNAYKLHTLDTCLKLDDTVYLRDIALSLPQLPRELPSSHTNAKVAEVLSSLLGGEGHFSKDVHLPHNYHIDFEIRMDTNRNQVLPLSDVDTTSATDIQRVAVLCVSRSAYCLGSSHPRGFLAMKMRHLNAMGFHVILVNNWEMDKLEMEDAVTFLKTKIYSVEALPVAAVNVQSTQ.

Residues serine 126 and serine 140 each carry the phosphoserine modification. The region spanning 634-691 (VAVLCVSRSAYCLGSSHPRGFLAMKMRHLNAMGFHVILVNNWEMDKLEMEDAVTFLKT) is the RAP domain. Serine 708 is modified (phosphoserine).

It belongs to the FAST kinase family. As to quaternary structure, monomer. Found in a complex with GRSF1, DDX28, DHX30 and FASTKD5. Associates with the 16S mitochondrial rRNA (16S mt-rRNA). Forms a regulatory protein-RNA complex, consisting of RCC1L, NGRN, RPUSD3, RPUSD4, TRUB2, FASTKD2 and 16S mt-rRNA. As to expression, expression detected in spleen, thymus, testis, ovary, colon, heart, smooth muscle, kidney, brain, lung, liver and white adipose tissue with highest expression in heart, smooth muscle and thyroid.

The protein resides in the mitochondrion matrix. Its subcellular location is the mitochondrion nucleoid. Its function is as follows. Plays an important role in assembly of the mitochondrial large ribosomal subunit. As a component of a functional protein-RNA module, consisting of RCC1L, NGRN, RPUSD3, RPUSD4, TRUB2, FASTKD2 and 16S mitochondrial ribosomal RNA (16S mt-rRNA), controls 16S mt-rRNA abundance and is required for intra-mitochondrial translation. May play a role in mitochondrial apoptosis. This Homo sapiens (Human) protein is FAST kinase domain-containing protein 2, mitochondrial.